The sequence spans 275 residues: Myoblast determination protein 1 homolog (275 aa).

The bHLH domain occupies 84–135; that stretch reads DRRKAATMRERRRLSKVNDAFETLKRCTSTNPNQRLPKVEILRNAISYIESL. The tract at residues 234–275 is disordered; that stretch reads EGHEESPCSPHEGSVLSDTGTTAPSPTSCPQQQAQETIYQVL. The span at 249–275 shows a compositional bias: polar residues; the sequence is LSDTGTTAPSPTSCPQQQAQETIYQVL.

As to quaternary structure, efficient DNA binding requires dimerization with another bHLH protein. From mid-gastrula to just before somite formation, expressed in cells adjacent to axial mesoderm. Subsequently, during the anterior-to-posterior wave of somite formation and maturation, expressed within particular regions of each somite. Expressed in both muscle and non-muscle cells.

The protein resides in the nucleus. In terms of biological role, may act as a transcriptional activator that promotes transcription of muscle-specific target genes and plays a role in muscle differentiation. The polypeptide is Myoblast determination protein 1 homolog (myod1) (Danio rerio (Zebrafish)).